An 85-amino-acid polypeptide reads, in one-letter code: Cell division topological specificity factor (85 aa).

The protein belongs to the MinE family.

Its function is as follows. Prevents the cell division inhibition by proteins MinC and MinD at internal division sites while permitting inhibition at polar sites. This ensures cell division at the proper site by restricting the formation of a division septum at the midpoint of the long axis of the cell. The protein is Cell division topological specificity factor of Shewanella amazonensis (strain ATCC BAA-1098 / SB2B).